A 156-amino-acid polypeptide reads, in one-letter code: Cyanate hydratase (156 aa).

Residues R96, E99, and S122 contribute to the active site.

It belongs to the cyanase family.

It catalyses the reaction cyanate + hydrogencarbonate + 3 H(+) = NH4(+) + 2 CO2. Functionally, catalyzes the reaction of cyanate with bicarbonate to produce ammonia and carbon dioxide. The chain is Cyanate hydratase from Escherichia coli (strain ATCC 8739 / DSM 1576 / NBRC 3972 / NCIMB 8545 / WDCM 00012 / Crooks).